The primary structure comprises 874 residues: Alanine--tRNA ligase (874 aa).

Histidine 562, histidine 566, cysteine 665, and histidine 669 together coordinate Zn(2+).

The protein belongs to the class-II aminoacyl-tRNA synthetase family. Zn(2+) serves as cofactor.

The protein localises to the cytoplasm. The catalysed reaction is tRNA(Ala) + L-alanine + ATP = L-alanyl-tRNA(Ala) + AMP + diphosphate. In terms of biological role, catalyzes the attachment of alanine to tRNA(Ala) in a two-step reaction: alanine is first activated by ATP to form Ala-AMP and then transferred to the acceptor end of tRNA(Ala). Also edits incorrectly charged Ser-tRNA(Ala) and Gly-tRNA(Ala) via its editing domain. This chain is Alanine--tRNA ligase, found in Pseudomonas paraeruginosa (strain DSM 24068 / PA7) (Pseudomonas aeruginosa (strain PA7)).